We begin with the raw amino-acid sequence, 397 residues long: Lysophospholipid transporter LplT (397 aa).

11 helical membrane passes run 16-36 (MMAV…LLFA), 53-73 (VLQM…GQVA), 91-111 (LGAV…LVGV), 139-159 (LMES…GMLA), 164-184 (GAAL…NLLI), 229-249 (WGAG…ALGI), 257-277 (YLNA…AKLV), 282-302 (VSRC…FSLQ), 304-324 (AALP…FFVV), 344-364 (IAVQ…LYSL), and 372-392 (VVGI…GLWL).

The protein belongs to the major facilitator superfamily. LplT (TC 2.A.1.42) family.

It is found in the cell inner membrane. Its function is as follows. Catalyzes the facilitated diffusion of 2-acyl-glycero-3-phosphoethanolamine (2-acyl-GPE) into the cell. This is Lysophospholipid transporter LplT from Cronobacter sakazakii (strain ATCC BAA-894) (Enterobacter sakazakii).